The sequence spans 875 residues: uncharacterized protein (875 aa).

This is an uncharacterized protein from Mycobacterium bovis (strain ATCC BAA-935 / AF2122/97).